Here is a 449-residue protein sequence, read N- to C-terminus: MFS acetylaranotin efflux transporter ataA (449 aa).

Transmembrane regions (helical) follow at residues Ser-6 to Pro-26, Tyr-45 to Ile-65, Trp-67 to Pro-87, Phe-115 to Val-135, Leu-155 to Gly-175, Asn-182 to Ile-202, and Leu-227 to Phe-247. N-linked (GlcNAc...) asparagine glycosylation occurs at Asn-252. Transmembrane regions (helical) follow at residues Ile-260 to Val-280, Val-287 to Phe-307, Val-321 to Val-341, Val-349 to Ala-369, and Ala-420 to Val-440.

The protein belongs to the major facilitator superfamily.

It is found in the cell membrane. Efflux pump that may provide the dual role of acetylaranotin export and self-protection by allowing the fungus to evade the harmful effect of its own acetylaranotin production. The sequence is that of MFS acetylaranotin efflux transporter ataA from Aspergillus terreus (strain NIH 2624 / FGSC A1156).